Consider the following 298-residue polypeptide: Dihydrodipicolinate reductase-like protein CRR1, chloroplastic (298 aa).

A chloroplast-targeting transit peptide spans 1 to 25 (MAAVNCHFFQLSRHLKPSRPSFSCS). 160–163 (APTL) serves as a coordination point for NAD(+).

The protein belongs to the DapB family. As to expression, expressed specifically in leaves.

It is found in the plastid. Its subcellular location is the chloroplast stroma. Functionally, dihydrodipicolinate reductase (DHPR)-like protein that may not function as DHPR in lysine biosynthesis. Required for both formation and activity of the chloroplast NAD(P)H dehydrogenase (NDH) complex of the photosynthetic electron transport chain. May function in assembly or stabilization of the NDH complex. The sequence is that of Dihydrodipicolinate reductase-like protein CRR1, chloroplastic from Arabidopsis thaliana (Mouse-ear cress).